We begin with the raw amino-acid sequence, 134 residues long: Profilin-1 (134 aa).

An intrachain disulfide couples Cys-13 to Cys-118. The short motif at 84–100 (AVIRGKKGSGGITTKKT) is the Involved in PIP2 interaction element. Thr-114 carries the phosphothreonine modification.

Belongs to the profilin family. Occurs in many kinds of cells as a complex with monomeric actin in a 1:1 ratio. Post-translationally, phosphorylated by MAP kinases.

The protein resides in the cytoplasm. The protein localises to the cytoskeleton. Binds to actin and affects the structure of the cytoskeleton. At high concentrations, profilin prevents the polymerization of actin, whereas it enhances it at low concentrations. The chain is Profilin-1 from Olea europaea (Common olive).